A 121-amino-acid polypeptide reads, in one-letter code: MENIPPKVQNQLAMLQQMQQQLQTVVSQKGQYELTIREARRAVEDLADVPEDAAVFMNVGSVMMQKSKEQVLASLNERIETLELRVKSLEKQEKALQGRFEQLSSQIRGALEGKQQPPGPA.

This sequence belongs to the prefoldin subunit beta family. As to quaternary structure, heterohexamer of two alpha and four beta subunits.

Its subcellular location is the cytoplasm. Functionally, molecular chaperone capable of stabilizing a range of proteins. Seems to fulfill an ATP-independent, HSP70-like function in archaeal de novo protein folding. The chain is Prefoldin subunit beta from Methanoculleus marisnigri (strain ATCC 35101 / DSM 1498 / JR1).